The chain runs to 512 residues: Matrix metalloproteinase-27 (512 aa).

Residues 1 to 17 (MKSFLLLFLLFVTFSSA) form the signal peptide. The propeptide at 18–98 (LPADQKMENE…PRCGVPDVGQ (81 aa)) is activation peptide. The Cysteine switch signature appears at 89–96 (PRCGVPDV). Cys91 serves as a coordination point for Zn(2+). N-linked (GlcNAc...) asparagine glycosylation occurs at Asn110. Ca(2+) contacts are provided by Asp121 and Asp155. His165 is a binding site for Zn(2+). Asp173, Gly174, and Val178 together coordinate Ca(2+). Residue His181 coordinates Zn(2+). Ca(2+) contacts are provided by Gly188 and Asp192. His194 provides a ligand contact to Zn(2+). Ca(2+)-binding residues include Asp196 and Glu199. His216 provides a ligand contact to Zn(2+). Glu217 is an active-site residue. Zn(2+) contacts are provided by His220 and His226. 4 Hemopexin repeats span residues 276 to 325 (PHAC…WPSL), 326 to 371 (PADL…GFPR), 373 to 421 (VKKI…FPGI), and 422 to 465 (GLRV…WFQC). Cys279 and Cys465 are oxidised to a cystine. Residue Asp286 coordinates Ca(2+). Positions 377 and 426 each coordinate Ca(2+). A required for retention in the endoplasmic reticulum region spans residues 466 to 512 (KEPLNSSLDFHFNQEKAYSGEVETLHHQSLSLLIFGIVHLLNKICSY).

The protein belongs to the peptidase M10A family. Ca(2+) serves as cofactor. Zn(2+) is required as a cofactor. N-glycosylated.

It localises to the endoplasmic reticulum. Functionally, matrix metalloproteinases degrade protein components of the extracellular matrix such as fibronectin, laminin, gelatins and/or collagens. The chain is Matrix metalloproteinase-27 (MMP27) from Tupaia belangeri (Common tree shrew).